The sequence spans 150 residues: Nucleoside diphosphate kinase (150 aa).

ATP-binding residues include Lys9, Phe57, Arg85, Thr91, Arg102, and Asn112. The Pros-phosphohistidine intermediate role is filled by His115.

It belongs to the NDK family. The cofactor is Mg(2+).

The protein resides in the cytoplasm. The enzyme catalyses a 2'-deoxyribonucleoside 5'-diphosphate + ATP = a 2'-deoxyribonucleoside 5'-triphosphate + ADP. It carries out the reaction a ribonucleoside 5'-diphosphate + ATP = a ribonucleoside 5'-triphosphate + ADP. In terms of biological role, major role in the synthesis of nucleoside triphosphates other than ATP. The ATP gamma phosphate is transferred to the NDP beta phosphate via a ping-pong mechanism, using a phosphorylated active-site intermediate. The sequence is that of Nucleoside diphosphate kinase from Methanothermobacter thermautotrophicus (strain ATCC 29096 / DSM 1053 / JCM 10044 / NBRC 100330 / Delta H) (Methanobacterium thermoautotrophicum).